A 419-amino-acid polypeptide reads, in one-letter code: 3-isopropylmalate dehydratase large subunit (419 aa).

Residues Cys300, Cys360, and Cys363 each coordinate [4Fe-4S] cluster.

It belongs to the aconitase/IPM isomerase family. LeuC type 2 subfamily. Heterodimer of LeuC and LeuD. It depends on [4Fe-4S] cluster as a cofactor.

It catalyses the reaction (2R,3S)-3-isopropylmalate = (2S)-2-isopropylmalate. Its pathway is amino-acid biosynthesis; L-leucine biosynthesis; L-leucine from 3-methyl-2-oxobutanoate: step 2/4. Functionally, catalyzes the isomerization between 2-isopropylmalate and 3-isopropylmalate, via the formation of 2-isopropylmaleate. The chain is 3-isopropylmalate dehydratase large subunit from Nitratidesulfovibrio vulgaris (strain ATCC 29579 / DSM 644 / CCUG 34227 / NCIMB 8303 / VKM B-1760 / Hildenborough) (Desulfovibrio vulgaris).